Reading from the N-terminus, the 877-residue chain is Leucine--tRNA ligase (877 aa).

The 'HIGH' region signature appears at 43-53 (PYPSGRIHMGH). The 'KMSKS' region motif lies at 628-632 (KMSKS). Lysine 631 is a binding site for ATP.

Belongs to the class-I aminoacyl-tRNA synthetase family.

Its subcellular location is the cytoplasm. The catalysed reaction is tRNA(Leu) + L-leucine + ATP = L-leucyl-tRNA(Leu) + AMP + diphosphate. The chain is Leucine--tRNA ligase from Brucella canis (strain ATCC 23365 / NCTC 10854 / RM-666).